The following is a 629-amino-acid chain: Solute carrier family 22 member 14 (629 aa).

The segment at 1 to 21 (MKEDQNYKTAFGSQNSRDTHR) is disordered. Over 1-67 (MKEDQNYKTA…IGEFGTFQWR (67 aa)) the chain is Cytoplasmic. Polar residues predominate over residues 7-16 (YKTAFGSQNS). The helical transmembrane segment at 68-88 (LVVLTFIPSILSTFFIFSHHF) threads the bilayer. Residues 89-183 (LLTAQRPYCN…LVCGNEPNKE (95 aa)) lie on the Extracellular side of the membrane. Asparagine 98, asparagine 116, asparagine 124, and asparagine 149 each carry an N-linked (GlcNAc...) asparagine glycan. The chain crosses the membrane as a helical span at residues 184–204 (NGLTVFLSGVLTGSLLFGFLS). The Cytoplasmic portion of the chain corresponds to 205-209 (DKLGR). A helical membrane pass occupies residues 210-230 (YPIILLSLLGFLIFGFGTAFV). The Extracellular segment spans residues 231–240 (SSFYQYLFFR). Residues 241–261 (FFVAQASVGYAICSVSLVMEW) traverse the membrane as a helical segment. The Cytoplasmic portion of the chain corresponds to 262–269 (LVGEHRAQ). A helical membrane pass occupies residues 270–290 (AVILQHSFLTIGVILLTGLAY). The Extracellular portion of the chain corresponds to 291–295 (KVVHW). Residues 296 to 316 (RLLCLLGGMPMFPLICNIWVL) form a helical membrane-spanning segment. The Cytoplasmic segment spans residues 317-378 (RESPRWLMVR…DFCTNQHLFK (62 aa)). A helical transmembrane segment spans residues 379-399 (VVLAIGCVWFTVSYISFTLNL). The Extracellular portion of the chain corresponds to 400 to 409 (KMNDFGLDVY). A helical membrane pass occupies residues 410 to 430 (FVQMVRSIVAVPARLCCIILL). The Cytoplasmic segment spans residues 431-436 (EYFGRK). Residues 437–457 (WALNLTLFLVTSMCLFLLFLP) form a helical membrane-spanning segment. Residues 458–463 (QEPKST) are Extracellular-facing. The helical transmembrane segment at 464–484 (IILTLMLAEFSMAGTLSIFFI) threads the bilayer. The Cytoplasmic segment spans residues 485-496 (YTAELLPTVLRS). A helical membrane pass occupies residues 497–517 (TGLGMVSLAWVAGAISSVAIF). The Extracellular portion of the chain corresponds to 518 to 523 (KQTKTQ). The helical transmembrane segment at 524–544 (LPIFFCCLCCVLALCFSSLVP) threads the bilayer. The Cytoplasmic segment spans residues 545–629 (ETGSQSLRDS…PVQSLKAQPP (85 aa)).

This sequence belongs to the major facilitator (TC 2.A.1) superfamily. Organic cation transporter (TC 2.A.1.19) family. As to expression, testis-specific (at protein level). Specifically expressed in male germ cells (at protein level).

It is found in the mitochondrion inner membrane. It localises to the cell projection. The protein resides in the cilium. The protein localises to the flagellum membrane. The enzyme catalyses riboflavin(in) = riboflavin(out). Its function is as follows. Riboflavin transporter localized at the inner mitochondrial membrane of the spermatozoa midpiece, which is required for male fertility. SLC22A14-mediated riboflavin transport is essential for spermatozoa energy generation and motility: riboflavin is the precursor of FMN and FAD, which are coenzymes of many enzymes in the TCA cycle (the citric acid cycle) in mitochondria. Required for sperm motility and normal sperm flagellar structure. The sequence is that of Solute carrier family 22 member 14 from Mus musculus (Mouse).